The chain runs to 364 residues: 4-hydroxythreonine-4-phosphate dehydrogenase (364 aa).

Substrate-binding residues include His-138 and Thr-139. Residues His-169, His-214, and His-269 each coordinate a divalent metal cation. Substrate is bound by residues Lys-277, Asn-286, and Arg-295.

This sequence belongs to the PdxA family. As to quaternary structure, homodimer. Requires a divalent metal cation as cofactor.

It localises to the cytoplasm. The enzyme catalyses 4-(phosphooxy)-L-threonine + NAD(+) = 3-amino-2-oxopropyl phosphate + CO2 + NADH. It participates in cofactor biosynthesis; pyridoxine 5'-phosphate biosynthesis; pyridoxine 5'-phosphate from D-erythrose 4-phosphate: step 4/5. Catalyzes the NAD(P)-dependent oxidation of 4-(phosphooxy)-L-threonine (HTP) into 2-amino-3-oxo-4-(phosphooxy)butyric acid which spontaneously decarboxylates to form 3-amino-2-oxopropyl phosphate (AHAP). This chain is 4-hydroxythreonine-4-phosphate dehydrogenase, found in Bacteroides thetaiotaomicron (strain ATCC 29148 / DSM 2079 / JCM 5827 / CCUG 10774 / NCTC 10582 / VPI-5482 / E50).